Here is a 200-residue protein sequence, read N- to C-terminus: Putative pseudouridine methyltransferase (200 aa).

S-adenosyl-L-methionine is bound by residues methionine 133 and cysteine 187.

This sequence belongs to the methyltransferase superfamily. TrmY family.

It is found in the cytoplasm. The protein is Putative pseudouridine methyltransferase of Alcanivorax borkumensis (strain ATCC 700651 / DSM 11573 / NCIMB 13689 / SK2).